The sequence spans 775 residues: 5-methyltetrahydropteroyltriglutamate--homocysteine methyltransferase (775 aa).

5-methyltetrahydropteroyltri-L-glutamate-binding positions include 15–18 (RELK) and lysine 118. Residues 448-450 (IGS) and glutamate 501 contribute to the L-homocysteine site. Residues 448-450 (IGS) and glutamate 501 each bind L-methionine. 5-methyltetrahydropteroyltri-L-glutamate is bound by residues 532–533 (RC) and tryptophan 578. Aspartate 616 lines the L-homocysteine pocket. Residue aspartate 616 coordinates L-methionine. A 5-methyltetrahydropteroyltri-L-glutamate-binding site is contributed by glutamate 622. Residues histidine 658, cysteine 660, and glutamate 682 each coordinate Zn(2+). Histidine 711 functions as the Proton donor in the catalytic mechanism. Residue cysteine 743 coordinates Zn(2+).

The protein belongs to the vitamin-B12 independent methionine synthase family. Zn(2+) serves as cofactor.

It catalyses the reaction 5-methyltetrahydropteroyltri-L-glutamate + L-homocysteine = tetrahydropteroyltri-L-glutamate + L-methionine. It participates in amino-acid biosynthesis; L-methionine biosynthesis via de novo pathway; L-methionine from L-homocysteine (MetE route): step 1/1. Its function is as follows. Catalyzes the transfer of a methyl group from 5-methyltetrahydrofolate to homocysteine resulting in methionine formation. The polypeptide is 5-methyltetrahydropteroyltriglutamate--homocysteine methyltransferase (Cytophaga hutchinsonii (strain ATCC 33406 / DSM 1761 / CIP 103989 / NBRC 15051 / NCIMB 9469 / D465)).